The chain runs to 1087 residues: Error-prone DNA polymerase 3 (1087 aa).

The interval 1040 to 1064 is disordered; sequence AGRGDEFAHGSPGSSDTRDKSKPVV.

Belongs to the DNA polymerase type-C family. DnaE2 subfamily.

The protein localises to the cytoplasm. The enzyme catalyses DNA(n) + a 2'-deoxyribonucleoside 5'-triphosphate = DNA(n+1) + diphosphate. Functionally, DNA polymerase involved in damage-induced mutagenesis and translesion synthesis (TLS). It is not the major replicative DNA polymerase. The sequence is that of Error-prone DNA polymerase 3 from Agrobacterium fabrum (strain C58 / ATCC 33970) (Agrobacterium tumefaciens (strain C58)).